Here is a 336-residue protein sequence, read N- to C-terminus: Ketol-acid reductoisomerase (NADP(+)) (336 aa).

The region spanning 2-182 is the KARI N-terminal Rossmann domain; the sequence is AKIYYQQDCN…GGARAGVLET (181 aa). Residues 25–28, S51, S53, and 83–86 contribute to the NADP(+) site; these read YGSQ and DEKQ. H108 is a catalytic residue. G134 provides a ligand contact to NADP(+). A KARI C-terminal knotted domain is found at 183-328; sequence TFREETETDL…AELRGLMSWT (146 aa). Mg(2+)-binding residues include D191, E195, E227, and E231. S252 provides a ligand contact to substrate.

It belongs to the ketol-acid reductoisomerase family. Mg(2+) serves as cofactor.

The enzyme catalyses (2R)-2,3-dihydroxy-3-methylbutanoate + NADP(+) = (2S)-2-acetolactate + NADPH + H(+). It catalyses the reaction (2R,3R)-2,3-dihydroxy-3-methylpentanoate + NADP(+) = (S)-2-ethyl-2-hydroxy-3-oxobutanoate + NADPH + H(+). The protein operates within amino-acid biosynthesis; L-isoleucine biosynthesis; L-isoleucine from 2-oxobutanoate: step 2/4. It participates in amino-acid biosynthesis; L-valine biosynthesis; L-valine from pyruvate: step 2/4. Involved in the biosynthesis of branched-chain amino acids (BCAA). Catalyzes an alkyl-migration followed by a ketol-acid reduction of (S)-2-acetolactate (S2AL) to yield (R)-2,3-dihydroxy-isovalerate. In the isomerase reaction, S2AL is rearranged via a Mg-dependent methyl migration to produce 3-hydroxy-3-methyl-2-ketobutyrate (HMKB). In the reductase reaction, this 2-ketoacid undergoes a metal-dependent reduction by NADPH to yield (R)-2,3-dihydroxy-isovalerate. The chain is Ketol-acid reductoisomerase (NADP(+)) from Lachnoclostridium phytofermentans (strain ATCC 700394 / DSM 18823 / ISDg) (Clostridium phytofermentans).